A 103-amino-acid chain; its full sequence is Large ribosomal subunit protein uL24 (103 aa).

Belongs to the universal ribosomal protein uL24 family. In terms of assembly, part of the 50S ribosomal subunit.

Its function is as follows. One of two assembly initiator proteins, it binds directly to the 5'-end of the 23S rRNA, where it nucleates assembly of the 50S subunit. In terms of biological role, one of the proteins that surrounds the polypeptide exit tunnel on the outside of the subunit. The protein is Large ribosomal subunit protein uL24 of Enterococcus faecalis (strain ATCC 700802 / V583).